We begin with the raw amino-acid sequence, 463 residues long: Chromosomal replication initiator protein DnaA (463 aa).

A domain I, interacts with DnaA modulators region spans residues 1–83 (MNTNQIILTD…LQLFQHYNNT (83 aa)). A domain II region spans residues 83–124 (TIKSIDIITKELPGTTQTVIELPTKTFADIGSSELNSENIFS). The interval 125 to 343 (TLDVRFTFDN…GALNKVIAHS (219 aa)) is domain III, AAA+ region. Residues Gly171, Gly173, Lys174, and Thr175 each contribute to the ATP site. The segment at 344 to 463 (NFTLKEITLE…INLLMKILQH (120 aa)) is domain IV, binds dsDNA.

The protein belongs to the DnaA family. Oligomerizes as a right-handed, spiral filament on DNA at oriC.

It is found in the cytoplasm. In terms of biological role, plays an essential role in the initiation and regulation of chromosomal replication. ATP-DnaA binds to the origin of replication (oriC) to initiate formation of the DNA replication initiation complex once per cell cycle. Binds the DnaA box (a 9 base pair repeat at the origin) and separates the double-stranded (ds)DNA. Forms a right-handed helical filament on oriC DNA; dsDNA binds to the exterior of the filament while single-stranded (ss)DNA is stabiized in the filament's interior. The ATP-DnaA-oriC complex binds and stabilizes one strand of the AT-rich DNA unwinding element (DUE), permitting loading of DNA polymerase. After initiation quickly degrades to an ADP-DnaA complex that is not apt for DNA replication. Binds acidic phospholipids. This Rickettsia akari (strain Hartford) protein is Chromosomal replication initiator protein DnaA.